Reading from the N-terminus, the 108-residue chain is Large ribosomal subunit protein uL24 (108 aa).

The protein belongs to the universal ribosomal protein uL24 family. Part of the 50S ribosomal subunit.

Functionally, one of two assembly initiator proteins, it binds directly to the 5'-end of the 23S rRNA, where it nucleates assembly of the 50S subunit. In terms of biological role, one of the proteins that surrounds the polypeptide exit tunnel on the outside of the subunit. This Desulfosudis oleivorans (strain DSM 6200 / JCM 39069 / Hxd3) (Desulfococcus oleovorans) protein is Large ribosomal subunit protein uL24.